Consider the following 596-residue polypeptide: Beta-fructofuranosidase, insoluble isoenzyme 7 (596 aa).

The N-terminal stretch at 1–24 (MARLGLAVCAASFHLFLLLASTSS) is a signal peptide. Residues 51-54 (WQND), Gln70, and Trp78 each bind substrate. Asp54 is an active-site residue. Residue Asn82 is glycosylated (N-linked (GlcNAc...) asparagine). Substrate-binding positions include 115–116 (WS), 179–180 (RD), and Glu234. Asn330 carries N-linked (GlcNAc...) asparagine glycosylation. Residues Cys432 and Cys478 are joined by a disulfide bond. N-linked (GlcNAc...) asparagine glycosylation occurs at Asn552.

Belongs to the glycosyl hydrolase 32 family.

The protein resides in the secreted. Its subcellular location is the extracellular space. The protein localises to the apoplast. It is found in the cell wall. The enzyme catalyses Hydrolysis of terminal non-reducing beta-D-fructofuranoside residues in beta-D-fructofuranosides.. In terms of biological role, may play a role in sucrose partitioning during seed development. The polypeptide is Beta-fructofuranosidase, insoluble isoenzyme 7 (CIN7) (Oryza sativa subsp. indica (Rice)).